Reading from the N-terminus, the 95-residue chain is Small ribosomal subunit protein bS20 (95 aa).

2 disordered regions span residues 1-26 (MALR…RSRK) and 76-95 (KSRL…AQPA). The segment covering 80 to 95 (AKALNKAKAAQAAQPA) has biased composition (low complexity).

This sequence belongs to the bacterial ribosomal protein bS20 family.

Functionally, binds directly to 16S ribosomal RNA. In Deinococcus geothermalis (strain DSM 11300 / CIP 105573 / AG-3a), this protein is Small ribosomal subunit protein bS20.